Reading from the N-terminus, the 172-residue chain is Shikimate kinase (172 aa).

11 to 16 (GTGKTA) serves as a coordination point for ATP. Position 15 (Thr-15) interacts with Mg(2+). The substrate site is built by Asp-33, Arg-57, and Gly-79. Arg-117 provides a ligand contact to ATP. Arg-136 provides a ligand contact to substrate.

This sequence belongs to the shikimate kinase family. In terms of assembly, monomer. Mg(2+) serves as cofactor.

Its subcellular location is the cytoplasm. The enzyme catalyses shikimate + ATP = 3-phosphoshikimate + ADP + H(+). Its pathway is metabolic intermediate biosynthesis; chorismate biosynthesis; chorismate from D-erythrose 4-phosphate and phosphoenolpyruvate: step 5/7. Its function is as follows. Catalyzes the specific phosphorylation of the 3-hydroxyl group of shikimic acid using ATP as a cosubstrate. This is Shikimate kinase from Pelotomaculum thermopropionicum (strain DSM 13744 / JCM 10971 / SI).